A 276-amino-acid chain; its full sequence is NH(3)-dependent NAD(+) synthetase (276 aa).

47–54 (GISGGQDS) is an ATP binding site. Aspartate 53 is a binding site for Mg(2+). Arginine 141 is a binding site for deamido-NAD(+). Residue threonine 161 participates in ATP binding. Glutamate 166 is a binding site for Mg(2+). Residues lysine 174 and aspartate 181 each contribute to the deamido-NAD(+) site. Residues lysine 190 and threonine 212 each contribute to the ATP site. A deamido-NAD(+)-binding site is contributed by 261 to 262 (HK).

This sequence belongs to the NAD synthetase family. In terms of assembly, homodimer.

The catalysed reaction is deamido-NAD(+) + NH4(+) + ATP = AMP + diphosphate + NAD(+) + H(+). It functions in the pathway cofactor biosynthesis; NAD(+) biosynthesis; NAD(+) from deamido-NAD(+) (ammonia route): step 1/1. Its function is as follows. Catalyzes the ATP-dependent amidation of deamido-NAD to form NAD. Uses ammonia as a nitrogen source. The chain is NH(3)-dependent NAD(+) synthetase from Levilactobacillus brevis (strain ATCC 367 / BCRC 12310 / CIP 105137 / JCM 1170 / LMG 11437 / NCIMB 947 / NCTC 947) (Lactobacillus brevis).